We begin with the raw amino-acid sequence, 233 residues long: GSK-3-binding protein FRAT2 (233 aa).

The tract at residues 1 to 24 (MPCRREEEEEAGEEAEGEEEEDDS) is disordered. A compositionally biased stretch (acidic residues) spans 7-24 (EEEEAGEEAEGEEEEDDS). Positions 174–196 (DPHRLLQQLVLSGNLIKEAVRRL) are involved in GSK-3 binding. The disordered stretch occupies residues 204–233 (AATGPASAPGPGGGRSGPDRIALQPSGSLL).

This sequence belongs to the GSK-3-binding protein family. As to quaternary structure, binds GSK-3 and prevents GSK-3-dependent phosphorylation.

Its function is as follows. Positively regulates the Wnt signaling pathway by stabilizing beta-catenin through the association with GSK-3. This Homo sapiens (Human) protein is GSK-3-binding protein FRAT2 (FRAT2).